Here is a 192-residue protein sequence, read N- to C-terminus: Xanthine phosphoribosyltransferase (192 aa).

Xanthine is bound by residues leucine 20 and asparagine 27. 128–132 (AHGEA) lines the 5-phospho-alpha-D-ribose 1-diphosphate pocket. Position 156 (lysine 156) interacts with xanthine.

This sequence belongs to the purine/pyrimidine phosphoribosyltransferase family. Xpt subfamily. In terms of assembly, homodimer.

It localises to the cytoplasm. The catalysed reaction is XMP + diphosphate = xanthine + 5-phospho-alpha-D-ribose 1-diphosphate. It functions in the pathway purine metabolism; XMP biosynthesis via salvage pathway; XMP from xanthine: step 1/1. Its function is as follows. Converts the preformed base xanthine, a product of nucleic acid breakdown, to xanthosine 5'-monophosphate (XMP), so it can be reused for RNA or DNA synthesis. The protein is Xanthine phosphoribosyltransferase of Lactobacillus johnsonii (strain CNCM I-12250 / La1 / NCC 533).